Consider the following 381-residue polypeptide: E3 ubiquitin-protein ligase KCMF1 (381 aa).

An N-acetylserine modification is found at Ser-2. A Phosphoserine modification is found at Ser-2. Residues 4 to 60 (HEGVSCDACLKGNFRGRRYKCLICYDYDLCASCYESGATTTRHTTDHPMQCILTRVD) form a ZZ-type zinc finger. The Zn(2+) site is built by Cys-9, Cys-12, Cys-24, Cys-27, Cys-33, Cys-36, His-46, and His-50. The C2H2-type zinc finger occupies 78–101 (FTCPYCGKMGYTETSLQEHVTSEH). The segment at 154–193 (MFHPGRGLGGPRARRSNMHFTSSSTGGLSSSQSSYSPSNR) is disordered. Residues Ser-169, Ser-189, and Ser-212 each carry the phosphoserine modification. Low complexity predominate over residues 175 to 191 (SSSTGGLSSSQSSYSPS). Positions 225–257 (SQLQQLQMQLQLERQHAQAARQQLETARNATRR) form a coiled coil. Positions 294-314 (TRLNDPKMSETERQSMESERA) are disordered. Residues 297 to 314 (NDPKMSETERQSMESERA) show a composition bias toward basic and acidic residues. Residues Ser-335 and Ser-336 each carry the phosphoserine modification.

This sequence belongs to the KCMF1 family. Component of the SIFI complex, composed of KCMF1, UBR4 and calmodulin (CALM1, CALM2 or CALM3). As to expression, spleen, small intestine, ovary, peripheral blood, lung, kidney and pancreas. Expressed at low levels in the thymus, prostate, testis, colon, heart, brain, placenta and liver.

It localises to the cytoplasm. The protein localises to the late endosome. Its subcellular location is the lysosome. It carries out the reaction S-ubiquitinyl-[E2 ubiquitin-conjugating enzyme]-L-cysteine + [acceptor protein]-L-lysine = [E2 ubiquitin-conjugating enzyme]-L-cysteine + N(6)-ubiquitinyl-[acceptor protein]-L-lysine.. It participates in protein modification; protein ubiquitination. E3 ubiquitin-protein ligase which accepts ubiquitin from an E2 ubiquitin-conjugating enzyme and then transfers it to targeted substrates, promoting their degradation by the proteasome. Together with UBR4, component of the N-end rule pathway: ubiquitinates proteins bearing specific N-terminal residues that are destabilizing according to the N-end rule, leading to their degradation. Does not ubiquitinate proteins that are acetylated at the N-terminus. Together with UBR4, part of a protein quality control pathway that catalyzes ubiquitination and degradation of proteins that have been oxidized in response to reactive oxygen species (ROS): recognizes proteins with an Arg-CysO3(H) degron at the N-terminus, and mediates assembly of heterotypic 'Lys-63'-/'Lys-27'-linked branched ubiquitin chains on oxidized proteins, leading to their degradation by autophagy. Catalytic component of the SIFI complex, a multiprotein complex required to inhibit the mitochondrial stress response after a specific stress event has been resolved: ubiquitinates and degrades (1) components of the HRI-mediated signaling of the integrated stress response, such as DELE1 and EIF2AK1/HRI, as well as (2) unimported mitochondrial precursors. Within the SIFI complex, UBR4 initiates ubiquitin chain that are further elongated or branched by KCMF1. The sequence is that of E3 ubiquitin-protein ligase KCMF1 from Homo sapiens (Human).